Here is a 351-residue protein sequence, read N- to C-terminus: Photosystem II D2 protein (351 aa).

Residues T39 to T59 form a helical membrane-spanning segment. H116 contacts chlorophyll a. Residues G123–P139 traverse the membrane as a helical segment. The pheophytin a site is built by Q128 and N141. A helical membrane pass occupies residues V151–S164. H196 lines the chlorophyll a pocket. The chain crosses the membrane as a helical span at residues G206–E226. Residues H213 and F260 each coordinate a plastoquinone. H213 contributes to the Fe cation binding site. H267 is a binding site for Fe cation. Residues G277 to R293 form a helical membrane-spanning segment.

The protein belongs to the reaction center PufL/M/PsbA/D family. In terms of assembly, PSII is composed of 1 copy each of membrane proteins PsbA, PsbB, PsbC, PsbD, PsbE, PsbF, PsbH, PsbI, PsbJ, PsbK, PsbL, PsbM, PsbT, PsbX, PsbY, PsbZ, Psb30/Ycf12, peripheral proteins PsbO, CyanoQ (PsbQ), PsbU, PsbV and a large number of cofactors. It forms dimeric complexes. The cofactor is The D1/D2 heterodimer binds P680, chlorophylls that are the primary electron donor of PSII, and subsequent electron acceptors. It shares a non-heme iron and each subunit binds pheophytin, quinone, additional chlorophylls, carotenoids and lipids. There is also a Cl(-1) ion associated with D1 and D2, which is required for oxygen evolution. The PSII complex binds additional chlorophylls, carotenoids and specific lipids..

It localises to the cellular thylakoid membrane. It carries out the reaction 2 a plastoquinone + 4 hnu + 2 H2O = 2 a plastoquinol + O2. Its function is as follows. Photosystem II (PSII) is a light-driven water:plastoquinone oxidoreductase that uses light energy to abstract electrons from H(2)O, generating O(2) and a proton gradient subsequently used for ATP formation. It consists of a core antenna complex that captures photons, and an electron transfer chain that converts photonic excitation into a charge separation. The D1/D2 (PsbA/PsbD) reaction center heterodimer binds P680, the primary electron donor of PSII as well as several subsequent electron acceptors. D2 is needed for assembly of a stable PSII complex. The protein is Photosystem II D2 protein of Synechococcus sp. (strain CC9311).